Consider the following 279-residue polypeptide: Thymidylate synthase (279 aa).

DUMP is bound at residue 133-134 (RR). Cys154 serves as the catalytic Nucleophile. Residues 178–181 (RSND), Asn189, and 219–221 (HIY) contribute to the dUMP site. Position 181 (Asp181) interacts with (6R)-5,10-methylene-5,6,7,8-tetrahydrofolate. Ala278 is a binding site for (6R)-5,10-methylene-5,6,7,8-tetrahydrofolate.

Belongs to the thymidylate synthase family. Bacterial-type ThyA subfamily. In terms of assembly, homodimer.

The protein localises to the cytoplasm. The catalysed reaction is dUMP + (6R)-5,10-methylene-5,6,7,8-tetrahydrofolate = 7,8-dihydrofolate + dTMP. The protein operates within pyrimidine metabolism; dTTP biosynthesis. Functionally, catalyzes the reductive methylation of 2'-deoxyuridine-5'-monophosphate (dUMP) to 2'-deoxythymidine-5'-monophosphate (dTMP) while utilizing 5,10-methylenetetrahydrofolate (mTHF) as the methyl donor and reductant in the reaction, yielding dihydrofolate (DHF) as a by-product. This enzymatic reaction provides an intracellular de novo source of dTMP, an essential precursor for DNA biosynthesis. This chain is Thymidylate synthase, found in Streptococcus pyogenes serotype M3 (strain SSI-1).